Consider the following 396-residue polypeptide: Purine ribonucleoside efflux pump NepI (396 aa).

Topologically, residues 1–21 (MSEFIAENRGADAITRPNWSA) are cytoplasmic. The helical transmembrane segment at 22-42 (VFSVAFCVACLIIVEFLPVSL) threads the bilayer. Residues 43 to 54 (LTPMAQDLGISE) lie on the Periplasmic side of the membrane. The helical transmembrane segment at 55-75 (GVAGQSVTVTAFVAMFASLFI) threads the bilayer. Residues 76 to 85 (TQTIQATDRC) lie on the Cytoplasmic side of the membrane. The chain crosses the membrane as a helical span at residues 86 to 106 (YVVILFAVLLTLSCLLVSFAN). A topological domain (periplasmic) is located at residue Ser-107. A helical membrane pass occupies residues 108-128 (FSLLLIGRACLGLALGGFWAM). Over 129–147 (SASLTMRLVPPRTVPKALS) the chain is Cytoplasmic. A helical transmembrane segment spans residues 148–168 (VIFGAVSIALVIAAPLGSFLG). Over 169 to 175 (ELIGWRN) the chain is Periplasmic. The chain crosses the membrane as a helical span at residues 176 to 196 (VFNAAAVMGVLCIFWIIKSLP). Topologically, residues 197-215 (SLPGEPSHQKQNTFRLLQR) are cytoplasmic. Residues 216 to 236 (PGVMAGMIAIFMSFAGQFAFF) form a helical membrane-spanning segment. Topologically, residues 237 to 255 (TYIRPVYMNLAGFGVDGLT) are periplasmic. The helical transmembrane segment at 256-276 (LVLLSFGIASFIGTSLSSFIL) threads the bilayer. Residues 277-281 (KRSVK) lie on the Cytoplasmic side of the membrane. Residues 282–302 (LALAGAPLILAVSALVLTLWG) traverse the membrane as a helical segment. Residues 303 to 305 (SDK) are Periplasmic-facing. A helical transmembrane segment spans residues 306–326 (IVATGVAIIWGLTFALVPVGW). Topologically, residues 327 to 343 (STWITRSLADQAEKAGS) are cytoplasmic. The helical transmembrane segment at 344 to 364 (IQVAVIQLANTCGAAIGGYAL) threads the bilayer. Over 365–366 (DN) the chain is Periplasmic. The helical transmembrane segment at 367–387 (IGLTSPLMLSGTLMLLTALLV) threads the bilayer. Topologically, residues 388–396 (TAKVKMKKS) are cytoplasmic.

Belongs to the major facilitator superfamily. DHA1 family. NepI (TC 2.A.1.2.26) subfamily.

The protein resides in the cell inner membrane. It catalyses the reaction inosine(in) + H(+)(out) = inosine(out) + H(+)(in). The catalysed reaction is guanosine(in) + H(+)(out) = guanosine(out) + H(+)(in). Functionally, involved in the efflux of purine ribonucleosides, such as inosine and guanosine. The polypeptide is Purine ribonucleoside efflux pump NepI (Shigella boydii serotype 4 (strain Sb227)).